Here is a 468-residue protein sequence, read N- to C-terminus: Protein maelstrom 2 (468 aa).

The segment at residues 2–69 (PPKKHSGFMM…LTRVKKERLN (68 aa)) is a DNA-binding region (HMG box). The disordered stretch occupies residues 374–393 (KEDSPTVLSPASSRRSLASS). Residues 381-393 (LSPASSRRSLASS) are compositionally biased toward low complexity.

The protein belongs to the maelstrom family.

The protein resides in the cytoplasm. The protein localises to the nucleus. Functionally, involved both in the piRNA and miRNA metabolic processes. As a component of the meiotic nuage, plays a central role during oogenesis by repressing transposable elements and preventing their mobilization, which is essential for the germline integrity. Repression of transposable elements is mediated via the piRNA metabolic process, which mediates the repression of transposable elements during meiosis by forming complexes composed of piRNAs and Piwi proteins and governs the repression of transposons. As a nuclear component, it is required for proper differentiation in the germline stem cell (GSC) lineage by repressing microRNA-7 (miR-7), thereby acting as an indirect regulator of bag-of-marbles (Bam). Acts by binding to the promoter of miR-7 gene and repressing its expression; miR-7 repression alleviates the Bam repression by miR-7, thereby allowing differentiation in the germline stem cell (GSC) lineage. In Drosophila ananassae (Fruit fly), this protein is Protein maelstrom 2 (mael2).